Here is a 689-residue protein sequence, read N- to C-terminus: Glycine--tRNA ligase beta subunit (689 aa).

It belongs to the class-II aminoacyl-tRNA synthetase family. Tetramer of two alpha and two beta subunits.

It is found in the cytoplasm. It catalyses the reaction tRNA(Gly) + glycine + ATP = glycyl-tRNA(Gly) + AMP + diphosphate. The sequence is that of Glycine--tRNA ligase beta subunit from Citrobacter koseri (strain ATCC BAA-895 / CDC 4225-83 / SGSC4696).